A 468-amino-acid polypeptide reads, in one-letter code: Eukaryotic translation initiation factor 3 subunit M (468 aa).

The interval 42–61 (PLIEPLRQQEQSEEEPDRKQ) is disordered. The PCI domain maps to 206–377 (DLELAQTHVV…SEFLVHRATY (172 aa)). A disordered region spans residues 418–468 (MQAAAEETGQGKSGDKGAKGGDRRRNPQQQQQSQPSQPQQAREVELVGGAE). Residues 430-442 (SGDKGAKGGDRRR) show a composition bias toward basic and acidic residues. Positions 444–457 (PQQQQQSQPSQPQQ) are enriched in low complexity.

This sequence belongs to the eIF-3 subunit M family. As to quaternary structure, component of the eukaryotic translation initiation factor 3 (eIF-3) complex.

The protein resides in the cytoplasm. Functionally, component of the eukaryotic translation initiation factor 3 (eIF-3) complex, which is involved in protein synthesis of a specialized repertoire of mRNAs and, together with other initiation factors, stimulates binding of mRNA and methionyl-tRNAi to the 40S ribosome. The eIF-3 complex specifically targets and initiates translation of a subset of mRNAs involved in cell proliferation. This is Eukaryotic translation initiation factor 3 subunit M from Neosartorya fischeri (strain ATCC 1020 / DSM 3700 / CBS 544.65 / FGSC A1164 / JCM 1740 / NRRL 181 / WB 181) (Aspergillus fischerianus).